The following is a 343-amino-acid chain: Phosphatidylglycerol--prolipoprotein diacylglyceryl transferase (343 aa).

4 helical membrane-spanning segments follow: residues 22–42 (IPIR…LIIG), 54–74 (GVIY…GRLY), 97–117 (VWEG…GAWI), and 123–143 (GIPL…AQAI). Arg145 is a binding site for a 1,2-diacyl-sn-glycero-3-phospho-(1'-sn-glycerol). 2 helical membrane-spanning segments follow: residues 193–213 (VVHP…VLLI) and 257–277 (VNSF…LLAP). Residues 283–343 (PATLGGTPSS…SADNSGIVEK (61 aa)) are disordered. Over residues 295 to 325 (GGDDTAETEATADTEDTEDTEDGVTDAPEAD) the composition is skewed to acidic residues.

The protein belongs to the Lgt family.

The protein resides in the cell membrane. It catalyses the reaction L-cysteinyl-[prolipoprotein] + a 1,2-diacyl-sn-glycero-3-phospho-(1'-sn-glycerol) = an S-1,2-diacyl-sn-glyceryl-L-cysteinyl-[prolipoprotein] + sn-glycerol 1-phosphate + H(+). Its pathway is protein modification; lipoprotein biosynthesis (diacylglyceryl transfer). Catalyzes the transfer of the diacylglyceryl group from phosphatidylglycerol to the sulfhydryl group of the N-terminal cysteine of a prolipoprotein, the first step in the formation of mature lipoproteins. This chain is Phosphatidylglycerol--prolipoprotein diacylglyceryl transferase, found in Mycobacteroides abscessus (strain ATCC 19977 / DSM 44196 / CCUG 20993 / CIP 104536 / JCM 13569 / NCTC 13031 / TMC 1543 / L948) (Mycobacterium abscessus).